The primary structure comprises 201 residues: MYRAGVTLLVVAVVSLGRWDVVTMAAAIGIGWYEPEVSMAYIYQYNDTNLTIFCNTTACNSPFLASGMMISAPLKTRFLTSKVNYSNDMDNDRKNYTHQLKYMLAGAPGTYVNSSVTCWGSNGTFGAKTFLVKSMVNNTDSNTNTSIIHFVQQDELVDNPAYFRRSNHRAFMIVILTQVVFVVFIINASFIWSWTFRRHKR.

An N-terminal signal peptide occupies residues 1–25 (MYRAGVTLLVVAVVSLGRWDVVTMA). Topologically, residues 26–170 (AAIGIGWYEP…AYFRRSNHRA (145 aa)) are extracellular. N46, N49, N55, N84, N95, N113, N122, N137, and N144 each carry an N-linked (GlcNAc...) asparagine; by host glycan. The chain crosses the membrane as a helical span at residues 171 to 191 (FMIVILTQVVFVVFIINASFI). Residues 192–201 (WSWTFRRHKR) are Cytoplasmic-facing.

This sequence belongs to the HHV-5 UL120 protein family.

The protein resides in the host membrane. This is an uncharacterized protein from Homo sapiens (Human).